The following is a 144-amino-acid chain: Nucleoside diphosphate kinase (144 aa).

The ATP site is built by K11, F59, R87, T93, R104, and N114. H117 (pros-phosphohistidine intermediate) is an active-site residue.

Belongs to the NDK family. Homotetramer. Mg(2+) serves as cofactor.

The protein localises to the cytoplasm. It carries out the reaction a 2'-deoxyribonucleoside 5'-diphosphate + ATP = a 2'-deoxyribonucleoside 5'-triphosphate + ADP. The enzyme catalyses a ribonucleoside 5'-diphosphate + ATP = a ribonucleoside 5'-triphosphate + ADP. Major role in the synthesis of nucleoside triphosphates other than ATP. The ATP gamma phosphate is transferred to the NDP beta phosphate via a ping-pong mechanism, using a phosphorylated active-site intermediate. In Aliivibrio fischeri (strain MJ11) (Vibrio fischeri), this protein is Nucleoside diphosphate kinase.